The sequence spans 472 residues: Adenosylhomocysteinase (472 aa).

Positions 62, 137, and 197 each coordinate substrate. Thr-198–Thr-200 is an NAD(+) binding site. Residues Lys-227 and Asp-231 each coordinate substrate. NAD(+) is bound by residues Asn-232, Gly-261–Gly-266, Glu-284, Asn-319, Ile-340–His-342, and Asn-385.

It belongs to the adenosylhomocysteinase family. It depends on NAD(+) as a cofactor.

The protein resides in the cytoplasm. It catalyses the reaction S-adenosyl-L-homocysteine + H2O = L-homocysteine + adenosine. It functions in the pathway amino-acid biosynthesis; L-homocysteine biosynthesis; L-homocysteine from S-adenosyl-L-homocysteine: step 1/1. Functionally, may play a key role in the regulation of the intracellular concentration of adenosylhomocysteine. This is Adenosylhomocysteinase from Bordetella pertussis (strain Tohama I / ATCC BAA-589 / NCTC 13251).